A 207-amino-acid chain; its full sequence is Outer-membrane lipoprotein LolB (207 aa).

A signal peptide spans 1 to 21 (MPQRKISFYRLLPLATLLLAA). Residue cysteine 22 is the site of N-palmitoyl cysteine attachment. Residue cysteine 22 is the site of S-diacylglycerol cysteine attachment.

It belongs to the LolB family. As to quaternary structure, monomer.

It is found in the cell outer membrane. Plays a critical role in the incorporation of lipoproteins in the outer membrane after they are released by the LolA protein. The sequence is that of Outer-membrane lipoprotein LolB from Yersinia enterocolitica serotype O:8 / biotype 1B (strain NCTC 13174 / 8081).